Consider the following 355-residue polypeptide: 3-dehydroquinate synthase (355 aa).

NAD(+) contacts are provided by residues 71-76, 105-109, 129-130, K142, and K151; these read EGEASK, GVVGD, and TS. Residues E184, H246, and H263 each coordinate Zn(2+).

It belongs to the sugar phosphate cyclases superfamily. Dehydroquinate synthase family. Co(2+) serves as cofactor. The cofactor is Zn(2+). Requires NAD(+) as cofactor.

The protein localises to the cytoplasm. The catalysed reaction is 7-phospho-2-dehydro-3-deoxy-D-arabino-heptonate = 3-dehydroquinate + phosphate. It functions in the pathway metabolic intermediate biosynthesis; chorismate biosynthesis; chorismate from D-erythrose 4-phosphate and phosphoenolpyruvate: step 2/7. In terms of biological role, catalyzes the conversion of 3-deoxy-D-arabino-heptulosonate 7-phosphate (DAHP) to dehydroquinate (DHQ). This chain is 3-dehydroquinate synthase, found in Streptococcus thermophilus (strain CNRZ 1066).